A 500-amino-acid chain; its full sequence is Cysteine--tRNA ligase (500 aa).

Zn(2+) is bound at residue C29. Positions 31–41 (VTVYDLCHLGH) match the 'HIGH' region motif. Positions 213, 238, and 242 each coordinate Zn(2+). The 'KMSKS' region motif lies at 270–274 (KMSKS). Residue K273 participates in ATP binding.

Belongs to the class-I aminoacyl-tRNA synthetase family. In terms of assembly, monomer. It depends on Zn(2+) as a cofactor.

It localises to the cytoplasm. It catalyses the reaction tRNA(Cys) + L-cysteine + ATP = L-cysteinyl-tRNA(Cys) + AMP + diphosphate. The sequence is that of Cysteine--tRNA ligase from Prochlorococcus marinus (strain NATL2A).